The following is a 726-amino-acid chain: Replication restart protein PriA (726 aa).

Residue Ile234 coordinates ATP. In terms of domain architecture, Helicase ATP-binding spans 234–373 (IQSVLYKGVQ…LHRKCFYIKL (140 aa)). A DEAH box motif is present at residues 316–319 (LEEH). Zn(2+) is bound by residues Cys431, Cys434, Cys440, Cys443, Cys458, Cys461, Cys471, and Cys474.

The protein belongs to the helicase family. PriA subfamily. As to quaternary structure, component of the replication restart primosome. Requires Zn(2+) as cofactor.

The catalysed reaction is Couples ATP hydrolysis with the unwinding of duplex DNA by translocating in the 3'-5' direction.. The enzyme catalyses ATP + H2O = ADP + phosphate + H(+). In terms of biological role, initiates the restart of stalled replication forks, which reloads the replicative helicase on sites other than the origin of replication. Recognizes and binds to abandoned replication forks and remodels them to uncover a helicase loading site. Promotes assembly of the primosome at these replication forks. This is Replication restart protein PriA from Buchnera aphidicola subsp. Acyrthosiphon pisum (strain APS) (Acyrthosiphon pisum symbiotic bacterium).